The following is a 670-amino-acid chain: MSSGKSARYNRFSGGPSNLPTPDVTTGTRMETTFGPAFSAVTTITKADGTSTYKQHCRTPSSSSTLAYSPRDEEDSMPPISTPRRSDSAISVRSLHSESSMSLRSTFSLPEEEEEPEPLVFAEQPSVKLCCQLCCSVFKDPVITTCGHTFCRRCALKSEKCPVDNVKLTVVVNNIAVAEQIGELFIHCRHGCRVAGSGKPPIFEVDPRGCPFTIKLSARKDHEGSCDYRPVRCPNNPSCPPLLRMNLEAHLKECEHIKCPHSKYGCTFIGNQDTYETHLETCRFEGLKEFLQQTDDRFHEMHVALAQKDQEIAFLRSMLGKLSEKIDQLEKSLELKFDVLDENQSKLSEDLMEFRRDASMLNDELSHINARLNMGILGSYDPQQIFKCKGTFVGHQGPVWCLCVYSMGDLLFSGSSDKTIKVWDTCTTYKCQKTLEGHDGIVLALCIQGCKLYSGSADCTIIVWDIQNLQKVNTIRAHDNPVCTLVSSHNVLFSGSLKAIKVWDIVGTELKLKKELTGLNHWVRALVAAQSYLYSGSYQTIKIWDIRTLDCIHVLQTSGGSVYSIAVTNHHIVCGTYENLIHVWDIESKEQVRTLTGHVGTVYALAVISTPDQTKVFSASYDRSLRVWSMDNMICTQTLLRHQGSVTALAVSRGRLFSGAVDSTVKVWTC.

2 disordered regions span residues 1–37 and 49–97; these read MSSGKSARYNRFSGGPSNLPTPDVTTGTRMETTFGPA and GTST…SLHS. Polar residues-rich tracts occupy residues 15–31 and 49–67; these read GPSNLPTPDVTTGTRME and GTSTYKQHCRTPSSSSTLA. Serine 61, serine 88, and serine 91 each carry phosphoserine. An RING-type zinc finger spans residues 131-165; the sequence is CQLCCSVFKDPVITTCGHTFCRRCALKSEKCPVDN. The TRAF-type zinc-finger motif lies at 222 to 276; the sequence is HEGSCDYRPVRCPNNPSCPPLLRMNLEAHLKECEHIKCPHSKYGCTFIGNQDTYE. WD repeat units lie at residues 394–433, 437–474, 477–513, 515–554, 557–594, 597–638, and 641–669; these read GHQGPVWCLCVYSMGDLLFSGSSDKTIKVWDTCTTYKCQK, GHDGIVLALCIQGCKLYSGSADCTIIVWDIQNLQKVNT, AHDNPVCTLVSSHNVLFSGSLKAIKVWDIVGTELKLK, ELTGLNHWVRALVAAQSYLYSGSYQTIKIWDIRTLDCIHV, TSGGSVYSIAVTNHHIVCGTYENLIHVWDIESKEQVRT, GHVG…CTQT, and RHQGSVTALAVSRGRLFSGAVDSTVKVWT.

It belongs to the WD repeat TRAF7 family. Homodimer. Interacts with MAP3K3 and promotes the kinase activity of this enzyme. Post-translationally, phosphorylated by MAP3K3. Ubiquitinates itself upon phosphorylation. As to expression, ubiquitously expressed with high levels in skeletal muscle, heart, colon, spleen, kidney, liver and placenta.

Its subcellular location is the cytoplasmic vesicle. The protein resides in the cytoplasm. It localises to the nucleus. The enzyme catalyses S-ubiquitinyl-[E2 ubiquitin-conjugating enzyme]-L-cysteine + [acceptor protein]-L-lysine = [E2 ubiquitin-conjugating enzyme]-L-cysteine + N(6)-ubiquitinyl-[acceptor protein]-L-lysine.. It participates in protein modification; protein ubiquitination. Functionally, E3 ubiquitin and SUMO-protein ligase that plays a role in different biological processes such as innate immunity, inflammation or apoptosis. Potentiates MAP3K3-mediated activation of JUN/AP1 and DDIT3 transcriptional regulators. Negatively regulates MYB transcriptional activity by sequestering it to the cytosol via SUMOylation. Plays a role in the phosphorylation of MAPK1 and/or MAPK3, probably via its interaction with MAP3K3. Negatively regulates RLR-mediated innate immunity by promoting 'Lys-48'-linked ubiquitination of TBK1 through its RING domain to inhibit the cellular antiviral response. Promotes 'Lys-29'-linked polyubiquitination of NEMO/IKBKG and RELA leading to targeting these two proteins to lysosomal degradative pathways, reducing the transcriptional activity of NF-kappa-B. This Homo sapiens (Human) protein is E3 ubiquitin-protein ligase TRAF7 (TRAF7).